Reading from the N-terminus, the 411-residue chain is Protein Brevis radix-like 2 (411 aa).

2 disordered regions span residues 10-31 (KDGG…KSLT) and 103-149 (AAPS…DDDE). Positions 20 to 31 (ATATPNSGKSLT) are enriched in polar residues. A compositionally biased stretch (acidic residues) spans 136–149 (GEEDYDDDDDDDDE). The BRX 1 domain maps to 161-217 (REWTAQVEPGVQITFVSIPGGAGNDLKRIRFSREMFNKWEAQRWWGENYDRVVELYN). Disordered stretches follow at residues 245 to 294 (SRVG…VAAA) and 324 to 346 (AGPA…ASVS). A compositionally biased stretch (low complexity) spans 276–294 (SRTASSKAQLSSSSSVAAA). The BRX 2 domain occupies 356 to 411 (TEWVEQDEPGVSITIREFGDGTRELRRVRFSRERFGEERAKVWWEQNRDRIHAQYL).

It belongs to the BRX family.

The protein localises to the nucleus. The protein is Protein Brevis radix-like 2 (BRXL2) of Oryza sativa subsp. japonica (Rice).